Consider the following 461-residue polypeptide: Asparagine--tRNA ligase (461 aa).

This sequence belongs to the class-II aminoacyl-tRNA synthetase family. As to quaternary structure, homodimer.

Its subcellular location is the cytoplasm. The catalysed reaction is tRNA(Asn) + L-asparagine + ATP = L-asparaginyl-tRNA(Asn) + AMP + diphosphate + H(+). This is Asparagine--tRNA ligase from Geobacter metallireducens (strain ATCC 53774 / DSM 7210 / GS-15).